A 50-amino-acid polypeptide reads, in one-letter code: Protein PsbN (50 aa).

The helical transmembrane segment at 14–34 (VAVTILAVLLALTGFGLWTAF) threads the bilayer.

The protein belongs to the PsbN family.

The protein resides in the cellular thylakoid membrane. In terms of biological role, may play a role in photosystem I and II biogenesis. This Prochlorococcus marinus (strain MIT 9515) protein is Protein PsbN.